Reading from the N-terminus, the 231-residue chain is Ribose-5-phosphate isomerase A (231 aa).

Substrate-binding positions include 32–35 (TGST), 85–88 (DGAD), and 98–101 (KGGG). Glutamate 107 (proton acceptor) is an active-site residue. Lysine 125 contributes to the substrate binding site.

It belongs to the ribose 5-phosphate isomerase family. As to quaternary structure, homodimer.

The enzyme catalyses aldehydo-D-ribose 5-phosphate = D-ribulose 5-phosphate. It participates in carbohydrate degradation; pentose phosphate pathway; D-ribose 5-phosphate from D-ribulose 5-phosphate (non-oxidative stage): step 1/1. In terms of biological role, catalyzes the reversible conversion of ribose-5-phosphate to ribulose 5-phosphate. This Burkholderia mallei (strain NCTC 10247) protein is Ribose-5-phosphate isomerase A.